The sequence spans 280 residues: Bifunctional protein FolD (280 aa).

NADP(+)-binding positions include 164-166 (GRS), Ser-189, and Val-230.

The protein belongs to the tetrahydrofolate dehydrogenase/cyclohydrolase family. As to quaternary structure, homodimer.

It catalyses the reaction (6R)-5,10-methylene-5,6,7,8-tetrahydrofolate + NADP(+) = (6R)-5,10-methenyltetrahydrofolate + NADPH. The enzyme catalyses (6R)-5,10-methenyltetrahydrofolate + H2O = (6R)-10-formyltetrahydrofolate + H(+). It functions in the pathway one-carbon metabolism; tetrahydrofolate interconversion. Catalyzes the oxidation of 5,10-methylenetetrahydrofolate to 5,10-methenyltetrahydrofolate and then the hydrolysis of 5,10-methenyltetrahydrofolate to 10-formyltetrahydrofolate. This is Bifunctional protein FolD from Geotalea daltonii (strain DSM 22248 / JCM 15807 / FRC-32) (Geobacter daltonii).